The chain runs to 326 residues: Protease inhibitor (326 aa).

The first 24 residues, 1–24 (MKTIRTGMMTLAALAVLGTNVVSA), serve as a signal peptide directing secretion. 2 consecutive repeat copies span residues 177–208 (IILHVDKETKITTADGKELKPEDLQLGMEVEA) and 272–304 (VALIVGKDTKIVSAKDNKELAPEDLKAEMKVFA). The interval 177-304 (IILHVDKETK…DLKAEMKVFA (128 aa)) is 2 X 32 AA approximate repeats.

In terms of processing, proteolytically cleaved to yield at least three forms (BBRPI-A, -B, and -C).

It localises to the secreted. Shows inhibitory activity towards serine proteases, such as trypsin, chymotrypsin and subtilisin. May form a trypsin-inhibitor complex in a molar ratio of 1:1. The protein is Protease inhibitor of Brevibacillus choshinensis.